Here is a 220-residue protein sequence, read N- to C-terminus: MKQKGFSRKSSLLKEIDFYLVTDSGLSMKGTLSDVRDAVESGCRIVQYREKDKSTKEMVEEASEIKRICSGRAIFLVNDRIDVALAVDADGVHIGQDDMPVETARKLLGEDKIIGLSVNDREEAVLAEKLGADYVGLGPIFDTATKKDAGEGIGPLKIREVKDAIKLPVVAIGGINKENCESVIQNGADSLVAISAVVCSNDVKREAKYFIDMIRRTRKA.

Residues 47–51 and Asn-78 contribute to the 4-amino-2-methyl-5-(diphosphooxymethyl)pyrimidine site; that span reads QYREK. Mg(2+)-binding residues include Asp-79 and Asp-98. Ser-117 serves as a coordination point for 4-amino-2-methyl-5-(diphosphooxymethyl)pyrimidine. 143 to 145 serves as a coordination point for 2-[(2R,5Z)-2-carboxy-4-methylthiazol-5(2H)-ylidene]ethyl phosphate; that stretch reads TAT. Lys-146 lines the 4-amino-2-methyl-5-(diphosphooxymethyl)pyrimidine pocket. 2-[(2R,5Z)-2-carboxy-4-methylthiazol-5(2H)-ylidene]ethyl phosphate contacts are provided by residues Gly-174 and 194–195; that span reads IS.

This sequence belongs to the thiamine-phosphate synthase family. Requires Mg(2+) as cofactor.

It catalyses the reaction 2-[(2R,5Z)-2-carboxy-4-methylthiazol-5(2H)-ylidene]ethyl phosphate + 4-amino-2-methyl-5-(diphosphooxymethyl)pyrimidine + 2 H(+) = thiamine phosphate + CO2 + diphosphate. It carries out the reaction 2-(2-carboxy-4-methylthiazol-5-yl)ethyl phosphate + 4-amino-2-methyl-5-(diphosphooxymethyl)pyrimidine + 2 H(+) = thiamine phosphate + CO2 + diphosphate. The enzyme catalyses 4-methyl-5-(2-phosphooxyethyl)-thiazole + 4-amino-2-methyl-5-(diphosphooxymethyl)pyrimidine + H(+) = thiamine phosphate + diphosphate. It participates in cofactor biosynthesis; thiamine diphosphate biosynthesis; thiamine phosphate from 4-amino-2-methyl-5-diphosphomethylpyrimidine and 4-methyl-5-(2-phosphoethyl)-thiazole: step 1/1. Its function is as follows. Condenses 4-methyl-5-(beta-hydroxyethyl)thiazole monophosphate (THZ-P) and 2-methyl-4-amino-5-hydroxymethyl pyrimidine pyrophosphate (HMP-PP) to form thiamine monophosphate (TMP). This chain is Thiamine-phosphate synthase, found in Methanosarcina barkeri (strain Fusaro / DSM 804).